The chain runs to 1018 residues: Thrombospondin type-1 domain-containing protein 4 (1018 aa).

The N-terminal stretch at 1–25 (MVSHFMGSLSVLCFLLLLGFQFVCP) is a signal peptide. The TSP type-1 1 domain occupies 53-307 (PGVWGAWGPW…YKLCNTNVCP (255 aa)). 3 disordered regions span residues 111-235 (SVPL…RSGL), 254-279 (PAASSLFHSPETSNNHGVGTHGATQS), and 534-623 (SPQV…NWKQ). Over residues 187–200 (QRLRRQKLSSRHSR) the composition is skewed to basic residues. Residues 201–210 (SQGASSARHG) show a composition bias toward low complexity. The span at 259 to 279 (LFHSPETSNNHGVGTHGATQS) shows a compositional bias: polar residues. 2 stretches are compositionally biased toward basic and acidic residues: residues 556-577 (RSQEEGEQKGRNEEKEDLRGEA) and 592-603 (RHPDRFSPHRPD). 5 consecutive TSP type-1 domains span residues 676-737 (CPAF…KICS), 739-792 (WQIR…DMGP), 793-851 (CAKS…GPCT), 852-911 (GKVE…HLKP), and 912-968 (CGAK…QDCV). In terms of domain architecture, PLAC spans 971 to 1008 (VDENCKDKYYNCNVVVQARLCVYNYYKTACCASCTRVA).

Interacts with FBN1. May interact with TGFB1.

Its subcellular location is the secreted. The protein resides in the extracellular space. The protein localises to the extracellular matrix. Functionally, promotes FBN1 matrix assembly. Attenuates TGFB signaling, possibly by accelerating the sequestration of large latent complexes of TGFB or active TGFB by FBN1 microfibril assembly, thereby negatively regulating the expression of TGFB regulatory targets, such as POSTN. The sequence is that of Thrombospondin type-1 domain-containing protein 4 (THSD4) from Homo sapiens (Human).